The sequence spans 466 residues: MAPNYAKKCPVMGKAPSSGHSSIGPQDVHTLEVLSNFNREKIPERVVHALGAGAYGEFEVTHDISDICNIDMLLGVGKKTSLVTRFSTTGLERGSSEGVQDLKGMATKLFTSDGEWDWVFLNFPFFFIRDPVKFPDMIHSQRRDPQTNRLNPNNFWEFVTENHESIHMVLLQYSDFGRMFTWRTLSSYSGHAFKWVMPDGSFKYVHFFLSSDRGPNFKDGAGTIMDSSEPDFASRDLFEAIERGDHPSWTANVQVIDPKDAPHLGFNILDVTKHWNLGTYPQGVEKIPSRPFGKLTLNRNVKDYFSEVEQLAFSPSHLVPGIEASEDPILQARLFAYPDAQRYRLGRTLSKQASPRTSSTAEYQASLGKDFAEWVAQVSSDVWSQPHEDDYKFAREYYEILPEFRSQEFQDRMVERIVESVSQTRQDIRNKVYRTFALVSSELATRVQEGVEGAEIGQEKNVQARL.

Positions 1-22 (MAPNYAKKCPVMGKAPSSGHSS) are disordered. The active site involves histidine 48. Heme is bound at residue tyrosine 337.

Belongs to the catalase family. It depends on heme as a cofactor.

The protein operates within alkaloid biosynthesis; ergot alkaloid biosynthesis. Its function is as follows. Catalase; part of the gene cluster that mediates the biosynthesis of isofumigaclavines, fungal ergot alkaloids. The tryptophan dimethylallyltransferase ifgA catalyzes the first step of ergot alkaloid biosynthesis by condensing dimethylallyl diphosphate (DMAP) and tryptophan to form 4-dimethylallyl-L-tryptophan. The second step is catalyzed by the methyltransferase ifgB that methylates 4-dimethylallyl-L-tryptophan in the presence of S-adenosyl-L-methionine, resulting in the formation of N-methyl-dimethylallyl-L-tryptophan. The catalase ifgD and the FAD-dependent oxidoreductase ifgC then transform N-methyl-dimethylallyl-L-tryptophan to chanoclavine-I which is further oxidized by ifgE in the presence of NAD(+), resulting in the formation of chanoclavine-I aldehyde. The chanoclavine-I aldehyde reductases ifgG and/or fgaOx3 reduce chanoclavine-I aldehyde to dihydrochanoclavine-I aldehyde that spontaneously dehydrates to form 6,8-dimethyl-6,7-didehydroergoline. The festuclavine dehydrogenases ifgF1 and/or ifgF2 then catalyze the reduction of 6,8-dimethyl-6,7-didehydroergoline to form festuclavine. Hydrolysis of festuclavine by a yet undetermined cytochrome P450 monooxygenase (called ifgH) then leads to the formation of isofumigaclavine B which is in turn acetylated by ifgI to isofumigaclavine A. Penicillium roqueforti has interestingly at least two sets of genes for the consumption of chanoclavine-I aldehyde on three different loci, the OYEs ifgG/fgaOx3 and the festuclavine synthase homologs ifgF1/ifgF2. The reason for the duplication of these genes is unclear, probably to ensure the conversion of chanoclavine-I aldehyde by differential gene expression under various environmental conditions. In Penicillium roqueforti (strain FM164), this protein is Catalase ifgD.